Consider the following 883-residue polypeptide: uncharacterized protein (883 aa).

The segment at 258–373 (INNQSDNQSN…NQFNKPDNEP (116 aa)) is disordered. 3 stretches are compositionally biased toward low complexity: residues 259-268 (NNQSDNQSNS), 277-317 (EPNG…SNSE), and 324-333 (NEPNTEPNTE). The segment covering 334–347 (SNGQSNSELNNQSD) has biased composition (polar residues). Residues 348-368 (NHPNNEPNSEPNNEPNNQFNK) show a composition bias toward low complexity.

It belongs to the mimivirus L137 family.

This is an uncharacterized protein from Acanthamoeba polyphaga mimivirus (APMV).